A 238-amino-acid chain; its full sequence is Dolichyldiphosphatase 1 (238 aa).

Helical transmembrane passes span 33–53, 100–120, 130–150, and 162–182; these read LAYL…LIIF, PSSH…FLYL, FLDL…AFLV, and WSQV…WFAF.

The protein belongs to the dolichyldiphosphatase family.

It localises to the endoplasmic reticulum membrane. It catalyses the reaction a di-trans,poly-cis-dolichyl diphosphate + H2O = a di-trans,poly-cis-dolichyl phosphate + phosphate + H(+). The protein operates within protein modification; protein glycosylation. Functionally, required for efficient N-glycosylation. Necessary for maintaining optimal levels of dolichol-linked oligosaccharides. Hydrolyzes dolichyl pyrophosphate at a very high rate and dolichyl monophosphate at a much lower rate. Does not act on phosphatidate. This is Dolichyldiphosphatase 1 (DOLPP1) from Rhinolophus ferrumequinum (Greater horseshoe bat).